The following is a 429-amino-acid chain: Adenosylmethionine-8-amino-7-oxononanoate aminotransferase (429 aa).

Trp52 contributes to the substrate binding site. Residue 112 to 113 participates in pyridoxal 5'-phosphate binding; sequence GS. Tyr144 is a substrate binding site. Residue Asp245 coordinates pyridoxal 5'-phosphate. The substrate site is built by Lys274 and Gly307. N6-(pyridoxal phosphate)lysine is present on Lys274. 308-309 is a pyridoxal 5'-phosphate binding site; sequence PT. Arg391 lines the substrate pocket.

Belongs to the class-III pyridoxal-phosphate-dependent aminotransferase family. BioA subfamily. In terms of assembly, homodimer. Pyridoxal 5'-phosphate is required as a cofactor.

Its subcellular location is the cytoplasm. It carries out the reaction (8S)-8-amino-7-oxononanoate + S-adenosyl-L-methionine = S-adenosyl-4-methylsulfanyl-2-oxobutanoate + (7R,8S)-7,8-diammoniononanoate. The protein operates within cofactor biosynthesis; biotin biosynthesis; 7,8-diaminononanoate from 8-amino-7-oxononanoate (SAM route): step 1/1. In terms of biological role, catalyzes the transfer of the alpha-amino group from S-adenosyl-L-methionine (SAM) to 7-keto-8-aminopelargonic acid (KAPA) to form 7,8-diaminopelargonic acid (DAPA). It is the only aminotransferase known to utilize SAM as an amino donor. The protein is Adenosylmethionine-8-amino-7-oxononanoate aminotransferase of Buchnera aphidicola subsp. Baizongia pistaciae (strain Bp).